Reading from the N-terminus, the 443-residue chain is tRNA-2-methylthio-N(6)-dimethylallyladenosine synthase (443 aa).

Residues 12–126 (KTFRVKSFGC…LPEMVADAAA (115 aa)) form the MTTase N-terminal domain. [4Fe-4S] cluster-binding residues include cysteine 21, cysteine 57, cysteine 89, cysteine 162, cysteine 166, and cysteine 169. One can recognise a Radical SAM core domain in the interval 148–380 (RKSAPTAFLT…QAALNRDQLA (233 aa)). Residues 383-443 (KASVGKTCEV…GPNSISGRLA (61 aa)) form the TRAM domain.

The protein belongs to the methylthiotransferase family. MiaB subfamily. In terms of assembly, monomer. [4Fe-4S] cluster serves as cofactor.

The protein resides in the cytoplasm. It carries out the reaction N(6)-dimethylallyladenosine(37) in tRNA + (sulfur carrier)-SH + AH2 + 2 S-adenosyl-L-methionine = 2-methylsulfanyl-N(6)-dimethylallyladenosine(37) in tRNA + (sulfur carrier)-H + 5'-deoxyadenosine + L-methionine + A + S-adenosyl-L-homocysteine + 2 H(+). Catalyzes the methylthiolation of N6-(dimethylallyl)adenosine (i(6)A), leading to the formation of 2-methylthio-N6-(dimethylallyl)adenosine (ms(2)i(6)A) at position 37 in tRNAs that read codons beginning with uridine. This is tRNA-2-methylthio-N(6)-dimethylallyladenosine synthase from Novosphingobium aromaticivorans (strain ATCC 700278 / DSM 12444 / CCUG 56034 / CIP 105152 / NBRC 16084 / F199).